The chain runs to 332 residues: Adenosine deaminase (332 aa).

H12 and H14 together coordinate Zn(2+). H14, D16, and G170 together coordinate substrate. H197 contributes to the Zn(2+) binding site. The active-site Proton donor is E200. Zn(2+) is bound at residue D278.

This sequence belongs to the metallo-dependent hydrolases superfamily. Adenosine and AMP deaminases family. Adenosine deaminase subfamily. Zn(2+) serves as cofactor.

It carries out the reaction adenosine + H2O + H(+) = inosine + NH4(+). It catalyses the reaction 2'-deoxyadenosine + H2O + H(+) = 2'-deoxyinosine + NH4(+). Its function is as follows. Catalyzes the hydrolytic deamination of adenosine and 2-deoxyadenosine. This is Adenosine deaminase from Clostridium perfringens (strain ATCC 13124 / DSM 756 / JCM 1290 / NCIMB 6125 / NCTC 8237 / Type A).